The sequence spans 163 residues: Phosphopantetheine adenylyltransferase (163 aa).

Ser10 provides a ligand contact to substrate. Residues 10 to 11 (SF) and His18 contribute to the ATP site. Residues Lys42, Leu74, and Arg88 each coordinate substrate. Residues 89–91 (GLR), Glu99, and 124–130 (YSFLSSS) contribute to the ATP site.

The protein belongs to the bacterial CoaD family. In terms of assembly, homohexamer. Mg(2+) serves as cofactor.

The protein localises to the cytoplasm. The enzyme catalyses (R)-4'-phosphopantetheine + ATP + H(+) = 3'-dephospho-CoA + diphosphate. It participates in cofactor biosynthesis; coenzyme A biosynthesis; CoA from (R)-pantothenate: step 4/5. Functionally, reversibly transfers an adenylyl group from ATP to 4'-phosphopantetheine, yielding dephospho-CoA (dPCoA) and pyrophosphate. This Bacillus mycoides (strain KBAB4) (Bacillus weihenstephanensis) protein is Phosphopantetheine adenylyltransferase.